Here is a 235-residue protein sequence, read N- to C-terminus: Cytidylate kinase (235 aa).

16 to 24 (GPAASGKST) is an ATP binding site.

Belongs to the cytidylate kinase family. Type 1 subfamily.

The protein localises to the cytoplasm. It carries out the reaction CMP + ATP = CDP + ADP. The enzyme catalyses dCMP + ATP = dCDP + ADP. This chain is Cytidylate kinase, found in Chlorobaculum tepidum (strain ATCC 49652 / DSM 12025 / NBRC 103806 / TLS) (Chlorobium tepidum).